A 931-amino-acid polypeptide reads, in one-letter code: Protein translocase subunit SecA (931 aa).

ATP is bound by residues Gln-87, 105–109, and Asp-515; that span reads GEGKT. The Zn(2+) site is built by Cys-915, Cys-917, Cys-926, and His-927.

The protein belongs to the SecA family. Monomer and homodimer. Part of the essential Sec protein translocation apparatus which comprises SecA, SecYEG and auxiliary proteins SecDF-YajC and YidC. It depends on Zn(2+) as a cofactor.

Its subcellular location is the cell inner membrane. The protein localises to the cytoplasm. It catalyses the reaction ATP + H2O + cellular proteinSide 1 = ADP + phosphate + cellular proteinSide 2.. Part of the Sec protein translocase complex. Interacts with the SecYEG preprotein conducting channel. Has a central role in coupling the hydrolysis of ATP to the transfer of proteins into and across the cell membrane, serving both as a receptor for the preprotein-SecB complex and as an ATP-driven molecular motor driving the stepwise translocation of polypeptide chains across the membrane. The chain is Protein translocase subunit SecA from Burkholderia ambifaria (strain ATCC BAA-244 / DSM 16087 / CCUG 44356 / LMG 19182 / AMMD) (Burkholderia cepacia (strain AMMD)).